Here is a 593-residue protein sequence, read N- to C-terminus: Aspartate--tRNA(Asp/Asn) ligase (593 aa).

An L-aspartate-binding site is contributed by Glu-173. The interval 197 to 200 (QLFK) is aspartate. Arg-219 lines the L-aspartate pocket. ATP contacts are provided by residues 219 to 221 (RDE) and Gln-228. His-451 contacts L-aspartate. Glu-485 serves as a coordination point for ATP. L-aspartate is bound at residue Arg-492. 537–540 (GIDR) contributes to the ATP binding site.

This sequence belongs to the class-II aminoacyl-tRNA synthetase family. Type 1 subfamily. Homodimer.

It is found in the cytoplasm. It carries out the reaction tRNA(Asx) + L-aspartate + ATP = L-aspartyl-tRNA(Asx) + AMP + diphosphate. Its function is as follows. Aspartyl-tRNA synthetase with relaxed tRNA specificity since it is able to aspartylate not only its cognate tRNA(Asp) but also tRNA(Asn). Reaction proceeds in two steps: L-aspartate is first activated by ATP to form Asp-AMP and then transferred to the acceptor end of tRNA(Asp/Asn). This is Aspartate--tRNA(Asp/Asn) ligase from Legionella pneumophila (strain Corby).